A 279-amino-acid chain; its full sequence is 3-methyl-2-oxobutanoate hydroxymethyltransferase (279 aa).

Asp43 and Asp82 together coordinate Mg(2+). 3-methyl-2-oxobutanoate-binding positions include 43 to 44 (DS), Asp82, and Lys112. Residue Glu114 participates in Mg(2+) binding. Catalysis depends on Glu181, which acts as the Proton acceptor.

Belongs to the PanB family. As to quaternary structure, homodecamer; pentamer of dimers. Mg(2+) serves as cofactor.

It is found in the cytoplasm. The catalysed reaction is 3-methyl-2-oxobutanoate + (6R)-5,10-methylene-5,6,7,8-tetrahydrofolate + H2O = 2-dehydropantoate + (6S)-5,6,7,8-tetrahydrofolate. It participates in cofactor biosynthesis; (R)-pantothenate biosynthesis; (R)-pantoate from 3-methyl-2-oxobutanoate: step 1/2. Functionally, catalyzes the reversible reaction in which hydroxymethyl group from 5,10-methylenetetrahydrofolate is transferred onto alpha-ketoisovalerate to form ketopantoate. The chain is 3-methyl-2-oxobutanoate hydroxymethyltransferase from Geobacillus thermodenitrificans (strain NG80-2).